A 62-amino-acid chain; its full sequence is MAHRITDECTYCAACEPECPVSAISAGDSIYVIDENVCVDCIGYHDEPACVAVCPVDCIIKV.

2 consecutive 4Fe-4S ferredoxin-type domains span residues 2 to 28 (AHRI…SAGD) and 29 to 62 (SIYV…IIKV). Positions 9, 12, 15, 19, 38, 41, 50, and 54 each coordinate [4Fe-4S] cluster.

[4Fe-4S] cluster is required as a cofactor.

In terms of biological role, ferredoxins are iron-sulfur proteins that transfer electrons in a wide variety of metabolic reactions. The chain is Ferredoxin-2 from Chlorobaculum tepidum (strain ATCC 49652 / DSM 12025 / NBRC 103806 / TLS) (Chlorobium tepidum).